A 140-amino-acid polypeptide reads, in one-letter code: ATP synthase epsilon chain (140 aa).

It belongs to the ATPase epsilon chain family. As to quaternary structure, F-type ATPases have 2 components, CF(1) - the catalytic core - and CF(0) - the membrane proton channel. CF(1) has five subunits: alpha(3), beta(3), gamma(1), delta(1), epsilon(1). CF(0) has three main subunits: a, b and c.

It localises to the cell inner membrane. In terms of biological role, produces ATP from ADP in the presence of a proton gradient across the membrane. In Xylella fastidiosa (strain Temecula1 / ATCC 700964), this protein is ATP synthase epsilon chain.